The primary structure comprises 208 residues: ATP-dependent Clp protease proteolytic subunit 2 (208 aa).

Catalysis depends on S102, which acts as the Nucleophile. H127 is a catalytic residue.

Belongs to the peptidase S14 family. As to quaternary structure, fourteen ClpP subunits assemble into 2 heptameric rings which stack back to back to give a disk-like structure with a central cavity, resembling the structure of eukaryotic proteasomes.

The protein localises to the cytoplasm. The catalysed reaction is Hydrolysis of proteins to small peptides in the presence of ATP and magnesium. alpha-casein is the usual test substrate. In the absence of ATP, only oligopeptides shorter than five residues are hydrolyzed (such as succinyl-Leu-Tyr-|-NHMec, and Leu-Tyr-Leu-|-Tyr-Trp, in which cleavage of the -Tyr-|-Leu- and -Tyr-|-Trp bonds also occurs).. Its function is as follows. Cleaves peptides in various proteins in a process that requires ATP hydrolysis. Has a chymotrypsin-like activity. Plays a major role in the degradation of misfolded proteins. This Chelativorans sp. (strain BNC1) protein is ATP-dependent Clp protease proteolytic subunit 2.